The primary structure comprises 371 residues: Sporulation-specific protein 2 (371 aa).

Its subcellular location is the spore wall. In terms of biological role, essential for sporulation and seems to have a role at the time of, or after, initiation of nuclear division. Appears to have a role in outer spore wall formation. The protein is Sporulation-specific protein 2 (SSP2) of Saccharomyces cerevisiae (strain ATCC 204508 / S288c) (Baker's yeast).